The sequence spans 338 residues: MSITRRTTLSKYLIEQQRETHNLPADLRLLIEVVARACKAISYNVSKGALGDALGTAGSENVQGEVQKKLDILSNEILLDANEWGGNLAAMASEEMETFFPIPANYPRGEYLLVFDPLDGSSNIDVNVSIGTIFSVLRCPDGQQATEQSFLQPGTEQVAAGYAVYGPQTVFVLTTGNGVNCFTLDREVGSWVLTQSNLRIPEDTREYAINASNARHWYDPVKRYVDELNAGAEGPRGENFNMRWIASMVADVHRILNRGGIFMYPADKRTPDRPGKLRLMYEANPMSFIVEQAGGAATTGLKRILDVQPTGLHQRVPVILGSKNEVERVARYHQEAQS.

4 residues coordinate Mg(2+): E94, D116, L118, and D119. Substrate contacts are provided by residues 119-122 (DGSS), N210, and K276. Position 282 (E282) interacts with Mg(2+).

This sequence belongs to the FBPase class 1 family. Homotetramer. The cofactor is Mg(2+).

The protein localises to the cytoplasm. It carries out the reaction beta-D-fructose 1,6-bisphosphate + H2O = beta-D-fructose 6-phosphate + phosphate. The protein operates within carbohydrate biosynthesis; gluconeogenesis. This Burkholderia thailandensis (strain ATCC 700388 / DSM 13276 / CCUG 48851 / CIP 106301 / E264) protein is Fructose-1,6-bisphosphatase class 1.